The chain runs to 330 residues: Glycerol-3-phosphate dehydrogenase [NAD(P)+] (330 aa).

NADPH is bound by residues serine 10, tryptophan 11, arginine 31, and lysine 105. Sn-glycerol 3-phosphate-binding residues include lysine 105, glycine 135, and serine 137. NADPH is bound at residue alanine 139. Sn-glycerol 3-phosphate contacts are provided by lysine 190, aspartate 243, serine 253, arginine 254, and asparagine 255. Lysine 190 functions as the Proton acceptor in the catalytic mechanism. Arginine 254 provides a ligand contact to NADPH. The NADPH site is built by valine 278 and glutamate 280.

This sequence belongs to the NAD-dependent glycerol-3-phosphate dehydrogenase family.

Its subcellular location is the cytoplasm. It carries out the reaction sn-glycerol 3-phosphate + NAD(+) = dihydroxyacetone phosphate + NADH + H(+). It catalyses the reaction sn-glycerol 3-phosphate + NADP(+) = dihydroxyacetone phosphate + NADPH + H(+). It functions in the pathway membrane lipid metabolism; glycerophospholipid metabolism. In terms of biological role, catalyzes the reduction of the glycolytic intermediate dihydroxyacetone phosphate (DHAP) to sn-glycerol 3-phosphate (G3P), the key precursor for phospholipid synthesis. The polypeptide is Glycerol-3-phosphate dehydrogenase [NAD(P)+] (Nitratidesulfovibrio vulgaris (strain DP4) (Desulfovibrio vulgaris)).